We begin with the raw amino-acid sequence, 116 residues long: NAD(P)H-quinone oxidoreductase subunit M (116 aa).

Belongs to the complex I NdhM subunit family. NDH-1 can be composed of about 15 different subunits; different subcomplexes with different compositions have been identified which probably have different functions.

The protein resides in the cellular thylakoid membrane. It carries out the reaction a plastoquinone + NADH + (n+1) H(+)(in) = a plastoquinol + NAD(+) + n H(+)(out). The catalysed reaction is a plastoquinone + NADPH + (n+1) H(+)(in) = a plastoquinol + NADP(+) + n H(+)(out). NDH-1 shuttles electrons from an unknown electron donor, via FMN and iron-sulfur (Fe-S) centers, to quinones in the respiratory and/or the photosynthetic chain. The immediate electron acceptor for the enzyme in this species is believed to be plastoquinone. Couples the redox reaction to proton translocation, and thus conserves the redox energy in a proton gradient. Cyanobacterial NDH-1 also plays a role in inorganic carbon-concentration. The chain is NAD(P)H-quinone oxidoreductase subunit M from Synechococcus sp. (strain RCC307).